Reading from the N-terminus, the 404-residue chain is MMDGTNFDDALTGEQKIRNFNINFGPQHPAAHGVLRLVLELDGEIVERCDPHIGLLHRGTEKLMESRTYLQNLPYFDRLDYVAPMNQEHAWCLAIEKLTGTVVPRRGSLIRVLYCEIGRILNHLLNITTQAMDVGALTPPLWGFEEREKLMVFYERACGARLHAAYFRPGGVHQDLPPDLLDDIEAWSHEFPSVMDDIDGLLTENRIFKQRNCDIGVVTEEEILEWGYSGVMVRGSGLAWDLRRAQPYECYDEFDFQIPVGKNGDCYDRYLVRMQEMRESLKIIQQAIVKLRETKGDVLARGKLTPPSRADMKTSMEALIHHFKLYTEGFHVPAGEVYAAVEAPKGEFGVFLKSDGTNRPYRAKIRAPGYLHLQSMDHVAKGHQLADVAAIIGTMDVVFGEIDR.

Belongs to the complex I 49 kDa subunit family. NDH-1 is composed of 14 different subunits. Subunits NuoB, C, D, E, F, and G constitute the peripheral sector of the complex.

The protein localises to the cell inner membrane. The enzyme catalyses a quinone + NADH + 5 H(+)(in) = a quinol + NAD(+) + 4 H(+)(out). Its function is as follows. NDH-1 shuttles electrons from NADH, via FMN and iron-sulfur (Fe-S) centers, to quinones in the respiratory chain. The immediate electron acceptor for the enzyme in this species is believed to be ubiquinone. Couples the redox reaction to proton translocation (for every two electrons transferred, four hydrogen ions are translocated across the cytoplasmic membrane), and thus conserves the redox energy in a proton gradient. The sequence is that of NADH-quinone oxidoreductase subunit D from Dinoroseobacter shibae (strain DSM 16493 / NCIMB 14021 / DFL 12).